Reading from the N-terminus, the 602-residue chain is Proteasome-associated ATPase (602 aa).

Positions 1-17 (MSGPRSGSGSDGSTGRP) are enriched in low complexity. A disordered region spans residues 1–31 (MSGPRSGSGSDGSTGRPGDAESRRSAYEKET). The span at 18 to 31 (GDAESRRSAYEKET) shows a compositional bias: basic and acidic residues. Positions 19 to 106 (DAESRRSAYE…LKEEVDRLAQ (88 aa)) form a coiled coil. ATP is bound at residue 289–294 (GCGKTL). Residues 601-602 (YL) are docks into pockets in the proteasome alpha-ring.

The protein belongs to the AAA ATPase family. As to quaternary structure, homohexamer. Assembles into a hexameric ring structure that caps the 20S proteasome core. Strongly interacts with the prokaryotic ubiquitin-like protein Pup through a hydrophobic interface; the interacting region of ARC lies in its N-terminal coiled-coil domain. There is one Pup binding site per ARC hexamer ring. Upon ATP-binding, the C-terminus of ARC interacts with the alpha-rings of the proteasome core, possibly by binding to the intersubunit pockets.

Its pathway is protein degradation; proteasomal Pup-dependent pathway. Its function is as follows. ATPase which is responsible for recognizing, binding, unfolding and translocation of pupylated proteins into the bacterial 20S proteasome core particle. May be essential for opening the gate of the 20S proteasome via an interaction with its C-terminus, thereby allowing substrate entry and access to the site of proteolysis. Thus, the C-termini of the proteasomal ATPase may function like a 'key in a lock' to induce gate opening and therefore regulate proteolysis. The polypeptide is Proteasome-associated ATPase (Frankia casuarinae (strain DSM 45818 / CECT 9043 / HFP020203 / CcI3)).